We begin with the raw amino-acid sequence, 1194 residues long: MFTLDSFRKDRTQHRQRQCKLPPPRLPPMCVNPAPGGTISRASRDLLKEFPQPKNLLNSVIGRALGISHAKDKLVYVHTNGPKKKKVTLHIKWPKSVEVEGYGSKKIDAERQAAAAACQLFKGWGLLGPRNELFDAAKYRVLADRFGSPADSWWRPEPTMPPTSWRQLNPENIRPAGTGGLSRSLGREEEEDEEEELEEGTIDVTEFLSMTQQDSHNPLRDSRGGSFEMTDDDSAIRALTQFPLPKNLLAKVIQIATSSSTAKNLMQFHTVGTKTKLATLTLLWPCPMTFVAKGRRKAEAENKAAALACKKLKSLGLVDRNNEPLTHAMYNLASLRELGETQRRPCTIQVPEPILRKIEAFLSHYPVDSSWISPELRLQSDDILPLGKDSGPLSDPITGKPYMPLSEAEEVRLSQSLLELWRRRGPIWQEAPQLPVDPHRDTILSAIEQHPVVVISGDTGCGKTTRIPQLLLERYVTEGRGARCNVIITQPRRISAVSVAQRVSHELGPSLRRNVGFQVRLESKPPARGGALLFCTVGILLRKLQSNPSLEGVSHVIVDEVHERDVNTDFLLILLKGLQRLNPALRLVLMSATGDNERFSRYFGGCPVIKVPGFMYPVKEHYLEDILAKLGKHQYPHRHRHHESEDECALDLDLVTDLVLHIDARGEPGGILCFLPGWQEIKGVQQRLQEALGMHESKYLILPVHSNIPMMDQKAIFQQPPLGVRKIVLATNIAETSITVNDIVHVVDSGLHKEERYDLKTKVSCLETVWVSRANVIQRRGRAGRCQSGFAYHLFPRSRLEKMVPFQVPEILRTPLENLVLQAKIHMPEKTAVEFLSKAVDSPNIKAVDEAVILLQEIGVLDQREYLTTLGQRLAHISTDPRLAKAIVLAAIFRCLHPLLVVVSCLTRDPFSSSLQNRAEVDKVKALLSHDSGSDHLAFVRAVAGWEEVLRWQDRTSRENYLEENLLYAPSLRFIHGLIKQFSENIYEAFLVGKPSDCTLPSAQCNEYSEEEELVKGVLMAGLYPNLIQVRQGKVTRQGKFKPNSVTYRTKSGNILLHKSTINREATRLRSRWLTYFMAVKSNGSVFVRDSSQVHPLAVLLLTDGDVHIRDDGRRATISLSDSDLLRLEGDSRTVRLLRELRRALGRMVERSLRSELAALPLSVQQEHGQLLALLAELLRGPCGSFDVRKTADD.

The span at 1 to 10 (MFTLDSFRKD) shows a compositional bias: basic and acidic residues. Residues 1 to 27 (MFTLDSFRKDRTQHRQRQCKLPPPRLP) are disordered. Serine 6 carries the phosphoserine modification. The 69-residue stretch at 53–121 (PKNLLNSVIG…QAAAAACQLF (69 aa)) folds into the DRBM domain. Residues 153–200 (WWRPEPTMPPTSWRQLNPENIRPAGTGGLSRSLGREEEEDEEEELEEG) form a disordered region. Over residues 188–200 (EEEEDEEEELEEG) the composition is skewed to acidic residues. A phosphoserine mark is found at serine 226 and serine 380. The region spanning 444-612 (LSAIEQHPVV…FGGCPVIKVP (169 aa)) is the Helicase ATP-binding domain. 457–464 (GDTGCGKT) contributes to the ATP binding site. The DEAH box motif lies at 559–562 (DEVH). Residues 654 to 827 (LVTDLVLHID…NLVLQAKIHM (174 aa)) enclose the Helicase C-terminal domain.

The protein belongs to the DEAD box helicase family. DEAH subfamily. As to quaternary structure, identified in a complex with TFAM and SSBP1. Interacts (via N-terminus) with ZC3HAV1 (via N-terminal domain) in an RNA-independent manner. Found in a complex with GRSF1, DDX28, FASTKD2 and FASTKD5.

The protein localises to the cytoplasm. The protein resides in the mitochondrion. It is found in the mitochondrion matrix. Its subcellular location is the mitochondrion nucleoid. The catalysed reaction is ATP + H2O = ADP + phosphate + H(+). Functionally, RNA-dependent helicase. Plays an important role in the assembly of the mitochondrial large ribosomal subunit. Associates with mitochondrial DNA. Required for optimal function of the zinc-finger antiviral protein ZC3HAV1. Involved in nervous system development and differentiation through its involvement in the up-regulation of a number of genes which are required for neurogenesis, including GSC, NCAM1, neurogenin, and NEUROD. This Rattus norvegicus (Rat) protein is ATP-dependent RNA helicase DHX30 (Dhx30).